Consider the following 98-residue polypeptide: uncharacterized protein (98 aa).

Positions 1 to 63 (MPRDKKLVHR…NGHSQPAIVA (63 aa)) are disordered. Residues 14-29 (DVEDEDNDQREEEWSD) are compositionally biased toward acidic residues. Polar residues predominate over residues 48 to 57 (EPSSASNGHS).

This is an uncharacterized protein from Aedes vexans (Inland floodwater mosquito).